Reading from the N-terminus, the 430-residue chain is Ribulose bisphosphate carboxylase (430 aa).

The active-site Proton acceptor is Lys160. Position 162 (Lys162) interacts with substrate. Mg(2+) contacts are provided by Lys186, Asp188, and Glu189. Lys186 carries the post-translational modification N6-carboxylysine. The active-site Proton acceptor is the His278. Residues Arg279, His311, 348–350 (SGG), and 370–373 (QAGG) each bind substrate.

The protein belongs to the RuBisCO large chain family. Type III subfamily. In terms of assembly, homodimer or homodecamer. In contrast to form I RuBisCO, the form III RuBisCO is composed solely of large subunits. Requires Mg(2+) as cofactor.

It catalyses the reaction 2 (2R)-3-phosphoglycerate + 2 H(+) = D-ribulose 1,5-bisphosphate + CO2 + H2O. It carries out the reaction D-ribulose 1,5-bisphosphate + O2 = 2-phosphoglycolate + (2R)-3-phosphoglycerate + 2 H(+). Functionally, catalyzes the addition of molecular CO(2) and H(2)O to ribulose 1,5-bisphosphate (RuBP), generating two molecules of 3-phosphoglycerate (3-PGA). Functions in an archaeal AMP degradation pathway, together with AMP phosphorylase and R15P isomerase. In Pyrococcus horikoshii (strain ATCC 700860 / DSM 12428 / JCM 9974 / NBRC 100139 / OT-3), this protein is Ribulose bisphosphate carboxylase.